Reading from the N-terminus, the 149-residue chain is Large ribosomal subunit protein uL22c (149 aa).

It belongs to the universal ribosomal protein uL22 family. As to quaternary structure, part of the 50S ribosomal subunit.

It is found in the plastid. Its subcellular location is the chloroplast. Its function is as follows. This protein binds specifically to 23S rRNA. Functionally, the globular domain of the protein is located near the polypeptide exit tunnel on the outside of the subunit, while an extended beta-hairpin is found that lines the wall of the exit tunnel in the center of the 70S ribosome. This is Large ribosomal subunit protein uL22c (rpl22) from Oryza nivara (Indian wild rice).